Consider the following 306-residue polypeptide: MKPTADILASIIEEVRPLTSKGIVADYIPALAKVPSDKLGIAVFTNQGEVITAGDAQEGFSIQSISKVLSLTLAMGLYQPDELWSRVGKEPSGQAFNSLIQLEMEQGIPRNPFINAGAIVVCDMLQSRLSAPRQRLLEFVRQLSGEPQIAYDKVVAASEMMHSDRNAAIAYLMRSFGNFHNEVIPVLHNYFHACALKMSCVELAKTFSYLANKGVSVVTGETVITPTQSKQTNALLATCGLYDGAGEFAYRVGMPGKSGVGGGIIAVVPGEMTIAVWSPALDQSGNSLAGTRALELLAQRIGRSIF.

Residues Ser-64, Asn-115, Glu-159, Asn-166, Tyr-190, Tyr-242, and Val-260 each contribute to the substrate site.

This sequence belongs to the glutaminase family. In terms of assembly, homotetramer.

The catalysed reaction is L-glutamine + H2O = L-glutamate + NH4(+). The chain is Glutaminase from Vibrio cholerae serotype O1 (strain ATCC 39315 / El Tor Inaba N16961).